The chain runs to 170 residues: Universal stress protein MJ0531 (170 aa).

The protein belongs to the universal stress protein A family.

This Methanocaldococcus jannaschii (strain ATCC 43067 / DSM 2661 / JAL-1 / JCM 10045 / NBRC 100440) (Methanococcus jannaschii) protein is Universal stress protein MJ0531.